We begin with the raw amino-acid sequence, 390 residues long: 1-deoxy-D-xylulose 5-phosphate reductoisomerase (390 aa).

Positions 18, 19, 20, 21, and 130 each coordinate NADPH. K131 contacts 1-deoxy-D-xylulose 5-phosphate. E132 serves as a coordination point for NADPH. D156 contributes to the Mn(2+) binding site. Residues S157, E158, S182, and H205 each contribute to the 1-deoxy-D-xylulose 5-phosphate site. Residue E158 participates in Mn(2+) binding. G211 provides a ligand contact to NADPH. 4 residues coordinate 1-deoxy-D-xylulose 5-phosphate: S218, N223, K224, and E227. Mn(2+) is bound at residue E227.

It belongs to the DXR family. Mg(2+) serves as cofactor. Mn(2+) is required as a cofactor.

It carries out the reaction 2-C-methyl-D-erythritol 4-phosphate + NADP(+) = 1-deoxy-D-xylulose 5-phosphate + NADPH + H(+). The protein operates within isoprenoid biosynthesis; isopentenyl diphosphate biosynthesis via DXP pathway; isopentenyl diphosphate from 1-deoxy-D-xylulose 5-phosphate: step 1/6. Its function is as follows. Catalyzes the NADPH-dependent rearrangement and reduction of 1-deoxy-D-xylulose-5-phosphate (DXP) to 2-C-methyl-D-erythritol 4-phosphate (MEP). The sequence is that of 1-deoxy-D-xylulose 5-phosphate reductoisomerase from Bacteroides thetaiotaomicron (strain ATCC 29148 / DSM 2079 / JCM 5827 / CCUG 10774 / NCTC 10582 / VPI-5482 / E50).